A 322-amino-acid polypeptide reads, in one-letter code: Rhomboid-like protein 16, chloroplastic (322 aa).

Residues 1–52 (MHAIFCRRVAVGCSSPQLTKLVTKQASQSRHSLSHLLPFDLSSRFVPPYVVS) constitute a chloroplast transit peptide. 6 helical membrane passes run 110–130 (WINGANGVVFGLVIANAAVFT), 166–186 (FSHVGATHIILNMMGLCYFGA), 201–221 (YFAGALGGSVFFLSSHALSVI), 238–258 (IGKLGANGPVYAITLLDMLLY), 265–285 (FGLMLRVPVFAGIYSLGLNII), and 295–315 (TLTSLDQLGGVVVAVIAWARI).

The protein belongs to the peptidase S54 family.

The protein localises to the plastid. It localises to the chloroplast membrane. Its function is as follows. Rhomboid-type serine protease that catalyzes intramembrane proteolysis. May cleave the plastid translocon component Tic40. The protein is Rhomboid-like protein 16, chloroplastic of Arabidopsis thaliana (Mouse-ear cress).